Reading from the N-terminus, the 88-residue chain is Small ribosomal subunit protein bS20 (88 aa).

A disordered region spans residues 1-27 (MANTPQAKKRARQNEKARKHNASMRSM). A compositionally biased stretch (basic residues) spans 7 to 22 (AKKRARQNEKARKHNA).

Belongs to the bacterial ribosomal protein bS20 family.

Binds directly to 16S ribosomal RNA. This Cellvibrio japonicus (strain Ueda107) (Pseudomonas fluorescens subsp. cellulosa) protein is Small ribosomal subunit protein bS20.